Here is a 244-residue protein sequence, read N- to C-terminus: tRNA (guanine-N(7)-)-methyltransferase (244 aa).

The S-adenosyl-L-methionine site is built by Glu75, Glu100, Asp127, and Asp150. The active site involves Asp150. Residues Lys154, Asp186, and 223 to 226 (TRFE) contribute to the substrate site.

Belongs to the class I-like SAM-binding methyltransferase superfamily. TrmB family.

The catalysed reaction is guanosine(46) in tRNA + S-adenosyl-L-methionine = N(7)-methylguanosine(46) in tRNA + S-adenosyl-L-homocysteine. Its pathway is tRNA modification; N(7)-methylguanine-tRNA biosynthesis. Its function is as follows. Catalyzes the formation of N(7)-methylguanine at position 46 (m7G46) in tRNA. In Xylella fastidiosa (strain 9a5c), this protein is tRNA (guanine-N(7)-)-methyltransferase.